Reading from the N-terminus, the 203-residue chain is MGSVNGPLRVGIGGPVGAGKTTLTAELARAMGQAYSVAVITNDIYTSEDAEFLLRAQVLPAERIRGVETGGCPHTAIREDASINLAAIAEFRTRLPDLDVIFIESGGDNLAATFSPELADLTIYVIDTAAGQDIPRKKGPGLTRSDLLIVNKVDLAPHVGVDVAQLEADTRAARGRRAYVMGSLREGRGVPEIVQFIKEVGGL.

14–21 (GPVGAGKT) provides a ligand contact to GTP.

It belongs to the SIMIBI class G3E GTPase family. UreG subfamily. As to quaternary structure, homodimer. UreD, UreF and UreG form a complex that acts as a GTP-hydrolysis-dependent molecular chaperone, activating the urease apoprotein by helping to assemble the nickel containing metallocenter of UreC. The UreE protein probably delivers the nickel.

The protein resides in the cytoplasm. Facilitates the functional incorporation of the urease nickel metallocenter. This process requires GTP hydrolysis, probably effectuated by UreG. This is Urease accessory protein UreG from Jannaschia sp. (strain CCS1).